A 60-amino-acid chain; its full sequence is Metallothionein B (60 aa).

A beta region spans residues 1–28 (MDPCDCSKSGTCNCGGSCTCTNCSCTSC). A divalent metal cation-binding residues include Cys-4, Cys-6, Cys-12, Cys-14, Cys-18, Cys-20, Cys-23, Cys-25, Cys-28, Cys-32, Cys-33, Cys-35, Cys-36, Cys-40, Cys-43, Cys-47, Cys-49, Cys-54, Cys-58, and Cys-59. Positions 29 to 60 (KKSCCPCCPSGCTKCASGCVCKGKTCDTSCCQ) are alpha.

The protein belongs to the metallothionein superfamily. Type 1 family.

In terms of biological role, metallothioneins have a high content of cysteine residues that bind various heavy metals. The protein is Metallothionein B (mtb) of Chionodraco hamatus (Antarctic teleost icefish).